We begin with the raw amino-acid sequence, 95 residues long: Protein TusB (95 aa).

It belongs to the DsrH/TusB family. Heterohexamer, formed by a dimer of trimers. The hexameric TusBCD complex contains 2 copies each of TusB, TusC and TusD. The TusBCD complex interacts with TusE.

It is found in the cytoplasm. In terms of biological role, part of a sulfur-relay system required for 2-thiolation of 5-methylaminomethyl-2-thiouridine (mnm(5)s(2)U) at tRNA wobble positions. The sequence is that of Protein TusB from Escherichia coli (strain K12 / MC4100 / BW2952).